Reading from the N-terminus, the 195-residue chain is MAGMRRLELSEALHLGPGWRHACHALLYAPDPGLLFGRIPLRYAVLMQMRFDGRLGFPGGFVDLRDGSLEDGLNRELGEELGEAAGAFRVERADYRSSHAGSRPRVVAHFYTKLLTLEQLTAVEMGAPRARDHGLEVLGLVRVPLYTLRDGVGGLPAFLENTFIGNAREQLLEAVQNLGLLEPGSFARLKISTPP.

In terms of domain architecture, Nudix hydrolase spans 18-168 (GWRHACHALL…LENTFIGNAR (151 aa)). Residues His24, Arg50, and Phe57 each contribute to the substrate site. The Mn(2+) site is built by Gly59, Glu76, Glu80, and His99. The short motif at 61–82 (FVDLRDGSLEDGLNRELGEELG) is the Nudix box element. 2 residues coordinate substrate: Asn166 and Gln170. Glu173 contacts Mn(2+).

It belongs to the Nudix hydrolase family. NUDT16 subfamily. As to quaternary structure, homodimer. It depends on Mg(2+) as a cofactor. The cofactor is Mn(2+). Requires Co(2+) as cofactor.

Its subcellular location is the nucleus. It localises to the nucleolus. The protein resides in the nucleoplasm. It is found in the cytoplasm. The enzyme catalyses a 5'-end (N(7)-methyl 5'-triphosphoguanosine)-ribonucleoside in mRNA + H2O = N(7)-methyl-GDP + a 5'-end phospho-ribonucleoside in mRNA + 2 H(+). It catalyses the reaction IDP + H2O = IMP + phosphate + H(+). It carries out the reaction dIDP + H2O = dIMP + phosphate + H(+). The catalysed reaction is a 5'-end NAD(+)-phospho-ribonucleoside in mRNA + H2O = a 5'-end phospho-ribonucleoside in mRNA + NAD(+) + H(+). The enzyme catalyses a 5'-end FAD-phospho-ribonucleoside in mRNA + H2O = a 5'-end phospho-adenosine-phospho-ribonucleoside in mRNA + FMN + 2 H(+). It catalyses the reaction a 5'-end CoA-ribonucleoside in mRNA + H2O = a 5'-end phospho-adenosine-phospho-ribonucleoside in mRNA + (R)-4'-phosphopantetheine + 2 H(+). RNA-binding and decapping enzyme that catalyzes the cleavage of the cap structure of snoRNAs and mRNAs in a metal-dependent manner. Part of the U8 snoRNP complex that is required for the accumulation of mature 5.8S and 28S rRNA. Has diphosphatase activity and removes m7G and/or m227G caps from U8 snoRNA and leaves a 5'monophosphate on the RNA. Also catalyzes the cleavage of the cap structure on mRNAs. Does not hydrolyze cap analog structures like 7-methylguanosine nucleoside triphosphate (m7GpppG). Also hydrolysis m7G- and m227G U3-capped RNAs but with less efficiencies. Has broad substrate specificity with manganese or cobalt as cofactor and can act on various RNA species. Binds to the U8 snoRNA; metal is not required for RNA-binding. May play a role in the regulation of snoRNAs and mRNAs degradation. Also acts as a phosphatase; hydrolyzes the non-canonical purine nucleotides inosine diphosphate (IDP) and deoxyinosine diphosphate (dITP) as well as guanosine diphosphate (GDP), deoxyguanosine diphosphate (dGDP), xanthine diphosphate (XDP), inosine triphosphate (ITP) and deoxyinosine triphosphate (ITP) to their respective monophosphate derivatives and does not distinguish between the deoxy- and ribose forms. The order of activity with different substrates is IDP &gt; dIDP &gt;&gt; GDP = dGDP &gt; XDP = ITP = dITP. Binds strongly to GTP, ITP and XTP. Participates in the hydrolysis of dIDP/IDP and probably excludes non-canonical purines from RNA and DNA precursor pools, thus preventing their incorporation into RNA and DNA and avoiding chromosomal lesions. Exhibits decapping activity towards NAD-capped RNAs and FAD-capped RNAs. Exhibits decapping activity towards dpCoA-capped RNAs in vitro. The sequence is that of U8 snoRNA-decapping enzyme (NUDT16) from Bos taurus (Bovine).